A 133-amino-acid chain; its full sequence is Large ribosomal subunit protein bL20 (133 aa).

The protein belongs to the bacterial ribosomal protein bL20 family.

In terms of biological role, binds directly to 23S ribosomal RNA and is necessary for the in vitro assembly process of the 50S ribosomal subunit. It is not involved in the protein synthesizing functions of that subunit. The sequence is that of Large ribosomal subunit protein bL20 from Bartonella tribocorum (strain CIP 105476 / IBS 506).